An 85-amino-acid polypeptide reads, in one-letter code: RNA-binding protein Hfq (85 aa).

The region spanning 9 to 68 is the Sm domain; it reads DPFLNALRRERVPVSIYLVNGIKLQGQVESFDQFVILLKNTVSQMVYKHAISTVVPARPF.

The protein belongs to the Hfq family. In terms of assembly, homohexamer.

In terms of biological role, RNA chaperone that binds small regulatory RNA (sRNAs) and mRNAs to facilitate mRNA translational regulation in response to envelope stress, environmental stress and changes in metabolite concentrations. Also binds with high specificity to tRNAs. The protein is RNA-binding protein Hfq of Shewanella frigidimarina (strain NCIMB 400).